A 550-amino-acid chain; its full sequence is Arginine--tRNA ligase (550 aa).

Residues 130 to 140 carry the 'HIGH' region motif; sequence ANPTGPIHLGG.

This sequence belongs to the class-I aminoacyl-tRNA synthetase family. Monomer.

The protein resides in the cytoplasm. The enzyme catalyses tRNA(Arg) + L-arginine + ATP = L-arginyl-tRNA(Arg) + AMP + diphosphate. The chain is Arginine--tRNA ligase from Corynebacterium efficiens (strain DSM 44549 / YS-314 / AJ 12310 / JCM 11189 / NBRC 100395).